An 820-amino-acid polypeptide reads, in one-letter code: Leucine--tRNA ligase (820 aa).

A 'HIGH' region motif is present at residues 42–52 (PYPSGDLHMGH). The 'KMSKS' region signature appears at 576–580 (KMSKS). Lysine 579 lines the ATP pocket.

Belongs to the class-I aminoacyl-tRNA synthetase family.

It is found in the cytoplasm. The catalysed reaction is tRNA(Leu) + L-leucine + ATP = L-leucyl-tRNA(Leu) + AMP + diphosphate. The protein is Leucine--tRNA ligase of Coxiella burnetii (strain RSA 331 / Henzerling II).